The following is a 184-amino-acid chain: GTP cyclohydrolase 1 (184 aa).

Zn(2+) is bound by residues Cys-75, His-78, and Cys-146.

The protein belongs to the GTP cyclohydrolase I family. Toroid-shaped homodecamer, composed of two pentamers of five dimers.

The catalysed reaction is GTP + H2O = 7,8-dihydroneopterin 3'-triphosphate + formate + H(+). It participates in cofactor biosynthesis; 7,8-dihydroneopterin triphosphate biosynthesis; 7,8-dihydroneopterin triphosphate from GTP: step 1/1. This is GTP cyclohydrolase 1 from Streptococcus pneumoniae serotype 2 (strain D39 / NCTC 7466).